The sequence spans 189 residues: MNFITVAALAIVMVLAQANPARVRRNEEMSERYCIKHLDHYNKYCGDNAGPIDRALFGKVAKFCPAYEKHCAVGKAGLVELPDLGSPLVMPPVLPRGSDFASLDLPIADERKPAHIHSSRTAPQTTRLTAAIVATCTPECTAAHCTDECKCAHTHPKVHQMCNPPSSAAMAETCQRWYSKCTMFTPVQY.

The N-terminal stretch at 1–18 is a signal peptide; it reads MNFITVAALAIVMVLAQA.

In terms of assembly, may interact with lin-12/Notch receptor. In terms of tissue distribution, expressed in coelomocytes (at protein level).

Its subcellular location is the apical cell membrane. Its function is as follows. Probable secreted lin-12/Notch ligand or co-ligand involved in the mediation of Notch signaling. Involved in the lin-12/Notch pathway signaling of cell fate in vulval precursor cells (VPCs), acting redundantly with dsl-1 and lag-2. Required for normal octanol avoidance response, acting via both lin-12/Notch and glp-1/Notch signaling pathways in neurons, in concert with lag-2. Involved in regulation of sleep-like quiescence during the larval to adult transition, acting via Notch receptor activation and in parallel with EGF signaling. The chain is Notch ligand osm-11 from Caenorhabditis elegans.